The chain runs to 213 residues: Large ribosomal subunit protein uL1 (213 aa).

This sequence belongs to the universal ribosomal protein uL1 family. As to quaternary structure, part of the 50S ribosomal subunit.

Binds directly to 23S rRNA. Probably involved in E site tRNA release. In terms of biological role, protein L1 is also a translational repressor protein, it controls the translation of its operon by binding to its mRNA. In Methanocella arvoryzae (strain DSM 22066 / NBRC 105507 / MRE50), this protein is Large ribosomal subunit protein uL1.